The following is a 148-amino-acid chain: uncharacterized protein (148 aa).

The signal sequence occupies residues 1–16; that stretch reads MDVLFIALLVAPLILG. Asn50 carries N-linked (GlcNAc...) asparagine glycosylation. The disordered stretch occupies residues 91 to 125; sequence MDPQNPVTTKPVTTEPVTTEPVTTEPQSPNQNDAM. Low complexity predominate over residues 96–116; that stretch reads PVTTKPVTTEPVTTEPVTTEP.

The protein localises to the secreted. This is an uncharacterized protein from Mus musculus (Mouse).